The sequence spans 160 residues: Phosphopantetheine adenylyltransferase (160 aa).

T11 contacts substrate. ATP-binding positions include 11 to 12 (TF) and H19. 3 residues coordinate substrate: K43, T75, and R89. ATP-binding positions include 90 to 92 (GLR), E100, and 125 to 131 (YSFLSSS).

The protein belongs to the bacterial CoaD family. Homohexamer. Requires Mg(2+) as cofactor.

The protein resides in the cytoplasm. The enzyme catalyses (R)-4'-phosphopantetheine + ATP + H(+) = 3'-dephospho-CoA + diphosphate. The protein operates within cofactor biosynthesis; coenzyme A biosynthesis; CoA from (R)-pantothenate: step 4/5. In terms of biological role, reversibly transfers an adenylyl group from ATP to 4'-phosphopantetheine, yielding dephospho-CoA (dPCoA) and pyrophosphate. The polypeptide is Phosphopantetheine adenylyltransferase (Listeria monocytogenes serotype 4b (strain CLIP80459)).